We begin with the raw amino-acid sequence, 264 residues long: Octanoyltransferase (264 aa).

The 189-residue stretch at 74-262 (GTASELVWLV…AFESVFGPRQ (189 aa)) folds into the BPL/LPL catalytic domain. Substrate-binding positions include 113 to 120 (RGGEYTYH), 193 to 195 (AIG), and 206 to 208 (GIA). The Acyl-thioester intermediate role is filled by Cys-224.

This sequence belongs to the LipB family.

It is found in the cytoplasm. It carries out the reaction octanoyl-[ACP] + L-lysyl-[protein] = N(6)-octanoyl-L-lysyl-[protein] + holo-[ACP] + H(+). It functions in the pathway protein modification; protein lipoylation via endogenous pathway; protein N(6)-(lipoyl)lysine from octanoyl-[acyl-carrier-protein]: step 1/2. Functionally, catalyzes the transfer of endogenously produced octanoic acid from octanoyl-acyl-carrier-protein onto the lipoyl domains of lipoate-dependent enzymes. Lipoyl-ACP can also act as a substrate although octanoyl-ACP is likely to be the physiological substrate. This is Octanoyltransferase from Brucella melitensis biotype 1 (strain ATCC 23456 / CCUG 17765 / NCTC 10094 / 16M).